Reading from the N-terminus, the 512-residue chain is MMNLPWLTIIVLFPILAGLLIPFIPDEKGKTIRWYALGVGILDFLLITYIFGYHYNFKDPSLQLVEDYSWVPLLRFHWCLGVDGLSMPLVLLTGFVTTLAILGAWPVKRNAKLFYFLMLAMYSGQIGVFVSQDLLLFFFMWELELIPVYLLLLVWGGKKRLYAATKFILYTAIGSIFILLAGLTMAFYGDIVTFDMRALKLKEYPLNLEILLYIGFLIAYAVKLPAFPLHTWLPDTHGEAHYSTCMLLAGILLKMGGYALIRINMDMLPNAHLIFAPFLIIIGVINIIYAALTSFAQRNMKRKIAYSSVSHMGFVLIGIGSLTNLGLSGAVLQMISHGLIGASLFFLAGTTYDRTRTLILEDMGGVAKKMPKTFAMFTTCSLASLALPGMSGFVAELMVFLGFATSASYSFEFKAIITFLEGIGIILTPIYLLSMLRQAFYGSESFTLLNKRKLIDAGPREIFVITCLVLPILGIGIYPKMATQIYNSKTETVVQHLQQVQSTFEKTSTLSL.

Helical transmembrane passes span 4–24 (LPWL…IPFI), 34–54 (WYAL…FGYH), 87–107 (MPLV…AWPV), 111–131 (AKLF…VFVS), 134–154 (LLLF…LLLV), 167–187 (FILY…TMAF), 210–230 (ILLY…FPLH), 241–261 (HYST…YALI), 273–293 (LIFA…AALT), 312–332 (MGFV…GAVL), 333–353 (QMIS…TTYD), 373–395 (TFAM…GFVA), 416–436 (IITF…LSML), and 462–482 (IFVI…PKMA).

Belongs to the complex I subunit 4 family.

It localises to the plastid. The protein localises to the chloroplast thylakoid membrane. The catalysed reaction is a plastoquinone + NADH + (n+1) H(+)(in) = a plastoquinol + NAD(+) + n H(+)(out). It catalyses the reaction a plastoquinone + NADPH + (n+1) H(+)(in) = a plastoquinol + NADP(+) + n H(+)(out). The polypeptide is NAD(P)H-quinone oxidoreductase chain 4, chloroplastic (Chlorokybus atmophyticus (Soil alga)).